The following is a 62-amino-acid chain: Large ribosomal subunit protein bL28 (62 aa).

This sequence belongs to the bacterial ribosomal protein bL28 family.

This Carboxydothermus hydrogenoformans (strain ATCC BAA-161 / DSM 6008 / Z-2901) protein is Large ribosomal subunit protein bL28.